The chain runs to 490 residues: Adenylosuccinate synthetase, chloroplastic (490 aa).

Residues 1-45 (MSLSSLTLDSNPRFAVGGPYHRRYPPLHHPRSFVSCSAKRPAVSA) constitute a chloroplast transit peptide. At serine 46 the chain carries N-acetylserine. GTP contacts are provided by residues 77–83 (GDEGKGK) and 105–107 (GHT). The Proton acceptor role is filled by aspartate 78. Mg(2+)-binding residues include aspartate 78 and glycine 105. IMP is bound by residues 78–81 (DEGK), 103–106 (NAGH), threonine 195, arginine 209, glutamine 289, threonine 304, and arginine 368. Histidine 106 functions as the Proton donor in the catalytic mechanism. 364–370 (TTTGRPR) is a binding site for substrate. Residues arginine 370, 396–398 (KLD), and 479–481 (GIG) each bind GTP.

The protein belongs to the adenylosuccinate synthetase family. In terms of assembly, homodimer. The cofactor is Mg(2+).

The protein resides in the plastid. It is found in the chloroplast. The enzyme catalyses IMP + L-aspartate + GTP = N(6)-(1,2-dicarboxyethyl)-AMP + GDP + phosphate + 2 H(+). It functions in the pathway purine metabolism; AMP biosynthesis via de novo pathway; AMP from IMP: step 1/2. In terms of biological role, plays an important role in the de novo pathway and in the salvage pathway of purine nucleotide biosynthesis. Catalyzes the first committed step in the biosynthesis of AMP from IMP. The polypeptide is Adenylosuccinate synthetase, chloroplastic (Arabidopsis thaliana (Mouse-ear cress)).